The primary structure comprises 262 residues: Acyl-[acyl-carrier-protein]--UDP-N-acetylglucosamine O-acyltransferase (262 aa).

It belongs to the transferase hexapeptide repeat family. LpxA subfamily. As to quaternary structure, homotrimer.

It is found in the cytoplasm. The enzyme catalyses a (3R)-hydroxyacyl-[ACP] + UDP-N-acetyl-alpha-D-glucosamine = a UDP-3-O-[(3R)-3-hydroxyacyl]-N-acetyl-alpha-D-glucosamine + holo-[ACP]. The protein operates within glycolipid biosynthesis; lipid IV(A) biosynthesis; lipid IV(A) from (3R)-3-hydroxytetradecanoyl-[acyl-carrier-protein] and UDP-N-acetyl-alpha-D-glucosamine: step 1/6. Functionally, involved in the biosynthesis of lipid A, a phosphorylated glycolipid that anchors the lipopolysaccharide to the outer membrane of the cell. This Campylobacter concisus (strain 13826) protein is Acyl-[acyl-carrier-protein]--UDP-N-acetylglucosamine O-acyltransferase.